A 200-amino-acid polypeptide reads, in one-letter code: Holliday junction branch migration complex subunit RuvA (200 aa).

Residues Met-1–Ser-65 form a domain I region. A domain II region spans residues Ser-66–Pro-144. Positions Val-145–Ser-149 are flexible linker. A domain III region spans residues Thr-150 to Ser-200.

Belongs to the RuvA family. Homotetramer. Forms an RuvA(8)-RuvB(12)-Holliday junction (HJ) complex. HJ DNA is sandwiched between 2 RuvA tetramers; dsDNA enters through RuvA and exits via RuvB. An RuvB hexamer assembles on each DNA strand where it exits the tetramer. Each RuvB hexamer is contacted by two RuvA subunits (via domain III) on 2 adjacent RuvB subunits; this complex drives branch migration. In the full resolvosome a probable DNA-RuvA(4)-RuvB(12)-RuvC(2) complex forms which resolves the HJ.

It is found in the cytoplasm. In terms of biological role, the RuvA-RuvB-RuvC complex processes Holliday junction (HJ) DNA during genetic recombination and DNA repair, while the RuvA-RuvB complex plays an important role in the rescue of blocked DNA replication forks via replication fork reversal (RFR). RuvA specifically binds to HJ cruciform DNA, conferring on it an open structure. The RuvB hexamer acts as an ATP-dependent pump, pulling dsDNA into and through the RuvAB complex. HJ branch migration allows RuvC to scan DNA until it finds its consensus sequence, where it cleaves and resolves the cruciform DNA. The protein is Holliday junction branch migration complex subunit RuvA of Chlamydia trachomatis serovar A (strain ATCC VR-571B / DSM 19440 / HAR-13).